The following is a 328-amino-acid chain: Serine/threonine protein kinase RdoA (328 aa).

Asp201 (proton acceptor) is an active-site residue. Residues Asn206 and Asp217 each coordinate Mg(2+). Residue Asp217 is part of the active site.

It belongs to the SrkA/RdoA protein kinase family. Monomer. The cofactor is Mg(2+).

It localises to the cytoplasm. It carries out the reaction L-seryl-[protein] + ATP = O-phospho-L-seryl-[protein] + ADP + H(+). The catalysed reaction is L-threonyl-[protein] + ATP = O-phospho-L-threonyl-[protein] + ADP + H(+). In terms of biological role, a protein kinase that (auto)phosphorylates on Ser and Thr residues, probably involved in the extracytoplasmic stress response. Probably acts to suppress the effects of stress linked to accumulation of reactive oxygen species. This is Serine/threonine protein kinase RdoA from Salmonella typhimurium (strain LT2 / SGSC1412 / ATCC 700720).